A 637-amino-acid polypeptide reads, in one-letter code: 3D-(3,5/4)-trihydroxycyclohexane-1,2-dione hydrolase (637 aa).

A thiamine diphosphate-binding site is contributed by Glu66. The interval 442–522 is thiamine pyrophosphate binding; sequence SLPGDLQRLW…INVLLFDNSG (81 aa). Positions 493 and 520 each coordinate Mg(2+).

It belongs to the TPP enzyme family. It depends on Mg(2+) as a cofactor. Thiamine diphosphate is required as a cofactor.

The enzyme catalyses 3D-3,5/4-trihydroxycyclohexane-1,2-dione + H2O = 5-deoxy-D-glucuronate + H(+). The protein operates within polyol metabolism; myo-inositol degradation into acetyl-CoA; acetyl-CoA from myo-inositol: step 3/7. Its function is as follows. Involved in the cleavage of the C1-C2 bond of 3D-(3,5/4)-trihydroxycyclohexane-1,2-dione (THcHDO) to yield 5-deoxy-glucuronate (5DG). The chain is 3D-(3,5/4)-trihydroxycyclohexane-1,2-dione hydrolase (iolD) from Bacillus subtilis (strain 168).